A 415-amino-acid polypeptide reads, in one-letter code: Serine hydroxymethyltransferase (415 aa).

(6S)-5,6,7,8-tetrahydrofolate-binding positions include leucine 117 and 121 to 123 (GHL). N6-(pyridoxal phosphate)lysine is present on lysine 226.

The protein belongs to the SHMT family. In terms of assembly, homodimer. Requires pyridoxal 5'-phosphate as cofactor.

It localises to the cytoplasm. It carries out the reaction (6R)-5,10-methylene-5,6,7,8-tetrahydrofolate + glycine + H2O = (6S)-5,6,7,8-tetrahydrofolate + L-serine. Its pathway is one-carbon metabolism; tetrahydrofolate interconversion. The protein operates within amino-acid biosynthesis; glycine biosynthesis; glycine from L-serine: step 1/1. Its function is as follows. Catalyzes the reversible interconversion of serine and glycine with tetrahydrofolate (THF) serving as the one-carbon carrier. This reaction serves as the major source of one-carbon groups required for the biosynthesis of purines, thymidylate, methionine, and other important biomolecules. Also exhibits THF-independent aldolase activity toward beta-hydroxyamino acids, producing glycine and aldehydes, via a retro-aldol mechanism. The chain is Serine hydroxymethyltransferase from Dehalococcoides mccartyi (strain ATCC BAA-2100 / JCM 16839 / KCTC 5957 / BAV1).